Consider the following 418-residue polypeptide: Bifunctional protein GlmU (418 aa).

Residues 1 to 236 (MAAVIVLAAG…VWQTEGVNDR (236 aa)) form a pyrophosphorylase region. UDP-N-acetyl-alpha-D-glucosamine-binding positions include 7-10 (LAAG), Lys21, Gln74, 79-80 (GT), 102-104 (YGD), Gly141, Glu155, Asn170, and Asn234. Residue Asp104 coordinates Mg(2+). Asn234 contributes to the Mg(2+) binding site. Residues 237–257 (VQLARMNAEVNRRIVTGWMRA) are linker. An N-acetyltransferase region spans residues 258–418 (GVTIIDPTST…DDTLNPEADQ (161 aa)). UDP-N-acetyl-alpha-D-glucosamine-binding residues include Arg339 and Lys357. Catalysis depends on His369, which acts as the Proton acceptor. A UDP-N-acetyl-alpha-D-glucosamine-binding site is contributed by Tyr372. Residue Ala386 participates in acetyl-CoA binding.

In the N-terminal section; belongs to the N-acetylglucosamine-1-phosphate uridyltransferase family. The protein in the C-terminal section; belongs to the transferase hexapeptide repeat family. Homotrimer. Requires Mg(2+) as cofactor.

It is found in the cytoplasm. It catalyses the reaction alpha-D-glucosamine 1-phosphate + acetyl-CoA = N-acetyl-alpha-D-glucosamine 1-phosphate + CoA + H(+). It carries out the reaction N-acetyl-alpha-D-glucosamine 1-phosphate + UTP + H(+) = UDP-N-acetyl-alpha-D-glucosamine + diphosphate. Its pathway is nucleotide-sugar biosynthesis; UDP-N-acetyl-alpha-D-glucosamine biosynthesis; N-acetyl-alpha-D-glucosamine 1-phosphate from alpha-D-glucosamine 6-phosphate (route II): step 2/2. It functions in the pathway nucleotide-sugar biosynthesis; UDP-N-acetyl-alpha-D-glucosamine biosynthesis; UDP-N-acetyl-alpha-D-glucosamine from N-acetyl-alpha-D-glucosamine 1-phosphate: step 1/1. It participates in bacterial outer membrane biogenesis; LPS lipid A biosynthesis. Functionally, catalyzes the last two sequential reactions in the de novo biosynthetic pathway for UDP-N-acetylglucosamine (UDP-GlcNAc). The C-terminal domain catalyzes the transfer of acetyl group from acetyl coenzyme A to glucosamine-1-phosphate (GlcN-1-P) to produce N-acetylglucosamine-1-phosphate (GlcNAc-1-P), which is converted into UDP-GlcNAc by the transfer of uridine 5-monophosphate (from uridine 5-triphosphate), a reaction catalyzed by the N-terminal domain. In Cutibacterium acnes (strain DSM 16379 / KPA171202) (Propionibacterium acnes), this protein is Bifunctional protein GlmU.